The primary structure comprises 372 residues: Beta-1,3-N-acetylglucosaminyltransferase radical fringe (372 aa).

The Cytoplasmic segment spans residues 1 to 10 (MNSSCLGLRR). The chain crosses the membrane as a helical; Signal-anchor for type II membrane protein span at residues 11–27 (TCFLLSVTAAAVLLLLL). The Lumenal segment spans residues 28–372 (PRGQPPAAPR…TIWCPNKKMS (345 aa)). Residues 30–48 (GQPPAAPRRRPPPAGPSRP) show a composition bias toward pro residues. Residues 30–96 (GQPPAAPRRR…RVRMGPPGGS (67 aa)) form a disordered region. Residues 64 to 78 (DRGGGSGAAGGGRGV) show a composition bias toward gly residues. Residue Arg-120 participates in substrate binding. An N-linked (GlcNAc...) asparagine glycan is attached at Asn-159. 2 cysteine pairs are disulfide-bonded: Cys-160-Cys-171 and Cys-189-Cys-253. Position 193 (Asp-193) interacts with substrate. Position 194 (Asp-194) interacts with Mn(2+). Asp-283 is a catalytic residue. His-307 contributes to the Mn(2+) binding site. A disulfide bridge connects residues Cys-357 and Cys-366.

This sequence belongs to the glycosyltransferase 31 family. Requires Mn(2+) as cofactor.

It is found in the golgi apparatus membrane. The enzyme catalyses 3-O-(alpha-L-fucosyl)-L-threonyl-[EGF-like domain protein] + UDP-N-acetyl-alpha-D-glucosamine = 3-O-(N-acetyl-beta-D-glucosaminyl-(1-&gt;3)-alpha-L-fucosyl)-L-threonyl-[EGF-like domain protein] + UDP + H(+). It carries out the reaction 3-O-(alpha-L-fucosyl)-L-seryl-[EGF-like domain protein] + UDP-N-acetyl-alpha-D-glucosamine = 3-O-(N-acetyl-beta-D-glucosaminyl-(1-&gt;3)-alpha-L-fucosyl)-L-seryl-[EGF-like domain protein] + UDP + H(+). In terms of biological role, glycosyltransferase that initiates the elongation of O-linked fucose residues attached to EGF-like repeats in the extracellular domain of Notch molecules. Plays an important role in limb outgrowth, it directs the formation and positioning of the apical ectodermal ridge (AER), one of the key organizer centers of vertebrate limb development. In Gallus gallus (Chicken), this protein is Beta-1,3-N-acetylglucosaminyltransferase radical fringe (RFNG).